The primary structure comprises 1288 residues: 5-oxoprolinase (1288 aa).

Residues 1248–1270 are disordered; sequence PGGGGYGDPEDPAPPPGSPPLFP. Over residues 1259–1270 the composition is skewed to pro residues; the sequence is PAPPPGSPPLFP. At Ser-1265 the chain carries Phosphoserine.

The protein belongs to the oxoprolinase family. Homodimer. In terms of tissue distribution, expressed in testis, kidney and liver.

It is found in the cytoplasm. The protein localises to the cytosol. The catalysed reaction is 5-oxo-L-proline + ATP + 2 H2O = L-glutamate + ADP + phosphate + H(+). Catalyzes the cleavage of 5-oxo-L-proline to form L-glutamate coupled to the hydrolysis of ATP to ADP and inorganic phosphate. The sequence is that of 5-oxoprolinase (Oplah) from Rattus norvegicus (Rat).